Reading from the N-terminus, the 399-residue chain is Sperm equatorial segment protein 1 (399 aa).

A signal peptide spans 1–18 (MKLVVLVALWLWPSSLLA). An N-linked (GlcNAc...) asparagine glycan is attached at Asn128. A compositionally biased stretch (basic and acidic residues) spans 136-145 (EEPFIEKEPE). Residues 136 to 250 (EEPFIEKEPE…PSAEDLPGRH (115 aa)) form a disordered region. The span at 157–167 (PEPELEPEPEP) shows a compositional bias: acidic residues. Polar residues predominate over residues 182-206 (VTSTTPNKELTGTSRISSMATQPAN). Residues 207–225 (TQATRITVTVKTTSTMDVS) are compositionally biased toward low complexity.

This sequence belongs to the SPESP1 family. Glycosylated. In testis there are two predominant forms of 77- and 67-kDa and a form of 47-kDa, whereas in epididymal sperm from caput, corpus, and cauda there are two forms of 47- and 43-kDa. Testis forms contain complex carbohydrate residues. Epididymal sperm forms are N-glycosylated. Then undergoes significant glycosylation in the testis and that the majority of these glycoconjugates are removed by the time sperm reach the caput epididymis. As to expression, testis specific.

The protein resides in the cytoplasmic vesicle. It localises to the secretory vesicle. It is found in the acrosome. Involved in fertilization ability of sperm. The sequence is that of Sperm equatorial segment protein 1 from Mus musculus (Mouse).